Reading from the N-terminus, the 258-residue chain is MCALVPPLFPNFGWPSTGEYDSYYLAGDILNNGGFLDFPVPEETYGAVTAVTQHQNSFGVSVSSEGNEIDNNPVVVKKLNHNASERDRRRKINSLFSSLRSCLPASGQSKKLSIPATVSRSLKYIPELQEQVKKLIKKKEELLVQISGQRNTECYVKQPPKAVANYISTVSATRLGDNEVMVQISSSKIHNFSISNVLSGLEEDRFVLVDMSSSRSQGERLFYTLHLQVEKIENYKLNCEELSQRMLYLYEECGNSYI.

The region spanning 76–128 (VKKLNHNASERDRRRKINSLFSSLRSCLPASGQSKKLSIPATVSRSLKYIPEL) is the bHLH domain.

In terms of assembly, homodimer. As to expression, expressed in vascular tissues. Detected in roots.

Its subcellular location is the nucleus. The polypeptide is Transcription factor ORG3 (ORG3) (Arabidopsis thaliana (Mouse-ear cress)).